We begin with the raw amino-acid sequence, 344 residues long: Probable pectinesterase 67 (344 aa).

The first 23 residues, 1–23 (MGHRTRMILVLTLVVMSIWGSDA), serve as a signal peptide directing secretion. 2 N-linked (GlcNAc...) asparagine glycosylation sites follow: N43 and N151. Q152 is a substrate binding site. D196 serves as the catalytic Nucleophile. R256 contributes to the substrate binding site. Residue N282 is glycosylated (N-linked (GlcNAc...) asparagine).

It belongs to the pectinesterase family. Expressed in flower buds.

The protein localises to the secreted. It localises to the cell wall. The enzyme catalyses [(1-&gt;4)-alpha-D-galacturonosyl methyl ester](n) + n H2O = [(1-&gt;4)-alpha-D-galacturonosyl](n) + n methanol + n H(+). It participates in glycan metabolism; pectin degradation; 2-dehydro-3-deoxy-D-gluconate from pectin: step 1/5. Functionally, acts in the modification of cell walls via demethylesterification of cell wall pectin. In Arabidopsis thaliana (Mouse-ear cress), this protein is Probable pectinesterase 67 (PME67).